The sequence spans 204 residues: MSNTFEDRIGRAQRKTSESDISVSINLDGSGKTDISTGLPFFDHMLTALGAHGSFDLEVKAVGDVEIDAHHTVEDTGIVLGQALGEALGTKAGIRRFGDAFIPMDECLAHAAVDVSGRPYYVGTGEPDAMVHTVIGGHYATVINQHFFETLALNARIALHVRCLYGRDPHHITEAEYKAVARALRAAVERDERVTGIPSTKGAL.

Belongs to the imidazoleglycerol-phosphate dehydratase family.

The protein resides in the cytoplasm. The catalysed reaction is D-erythro-1-(imidazol-4-yl)glycerol 3-phosphate = 3-(imidazol-4-yl)-2-oxopropyl phosphate + H2O. It participates in amino-acid biosynthesis; L-histidine biosynthesis; L-histidine from 5-phospho-alpha-D-ribose 1-diphosphate: step 6/9. This Corynebacterium urealyticum (strain ATCC 43042 / DSM 7109) protein is Imidazoleglycerol-phosphate dehydratase.